Consider the following 463-residue polypeptide: Quinolone resistance protein NorB (463 aa).

The next 14 helical transmembrane spans lie at 19 to 39 (IVLS…VVLI), 53 to 73 (IAVS…GGLA), 86 to 106 (IILN…LLLI), 107 to 127 (IGRL…LSII), 142 to 162 (YWSI…GAVA), 165 to 185 (LGWR…LFLI), 201 to 221 (FDIK…ILIT), 230 to 250 (SLLF…FIVL), 273 to 293 (TASN…NTFV), 299 to 319 (YSLL…LIMI), 334 to 354 (PMLI…LTFL), 357 to 377 (ILYV…LGIY), 403 to 423 (MASA…YAIV), and 435 to 455 (IALW…LLLV).

Belongs to the major facilitator superfamily. TCR/Tet family.

It is found in the cell membrane. In terms of biological role, multidrug efflux pump that acts independently of NorA and is one of the factors that confers resistance against diverse quinolones and chemical compounds. The polypeptide is Quinolone resistance protein NorB (norB) (Staphylococcus aureus (strain bovine RF122 / ET3-1)).